The following is a 228-amino-acid chain: Secreted LysM effector ECP6 (228 aa).

The N-terminal stretch at M1 to G18 is a signal peptide. 4 cysteine pairs are disulfide-bonded: C36–C90, C64–C98, C109–C163, and C168–C220. The 45-residue stretch at I42–I86 folds into the LysM 1 domain. Chitin-binding residues include T51, T53, N76, and I78. N89, N95, N127, and N133 each carry an N-linked (GlcNAc...) asparagine glycan. 2 consecutive LysM domains span residues G115 to V160 and G172 to L216. Chitin contacts are provided by G179, L181, V183, P205, S206, and L208. An N-linked (GlcNAc...) asparagine glycan is attached at N222.

The protein belongs to the secreted LysM effector family. Forms homodimers.

The protein resides in the secreted. Secreted effector that enables the plant pathogenic fungus to manipulate host defenses for successful infection. Binds chitine, but not to any other glycan, including the N-linked glycan chitobiose. Outcompetes host immune receptor for chitin binding through intrachain LysM dimerization. During infection, sequesters chitin oligosaccharides that are released from the cell walls of invading hyphae to prevent elicitation of host immunity. The polypeptide is Secreted LysM effector ECP6 (Passalora fulva (Tomato leaf mold)).